The following is a 147-amino-acid chain: UPF0178 protein Nther_1836 (147 aa).

This sequence belongs to the UPF0178 family.

The chain is UPF0178 protein Nther_1836 from Natranaerobius thermophilus (strain ATCC BAA-1301 / DSM 18059 / JW/NM-WN-LF).